We begin with the raw amino-acid sequence, 242 residues long: Ubiquinone biosynthesis O-methyltransferase (242 aa).

S-adenosyl-L-methionine-binding residues include Arg-44, Gly-64, Asp-85, and Met-129.

This sequence belongs to the methyltransferase superfamily. UbiG/COQ3 family.

It carries out the reaction a 3-demethylubiquinol + S-adenosyl-L-methionine = a ubiquinol + S-adenosyl-L-homocysteine + H(+). It catalyses the reaction a 3-(all-trans-polyprenyl)benzene-1,2-diol + S-adenosyl-L-methionine = a 2-methoxy-6-(all-trans-polyprenyl)phenol + S-adenosyl-L-homocysteine + H(+). Its pathway is cofactor biosynthesis; ubiquinone biosynthesis. In terms of biological role, O-methyltransferase that catalyzes the 2 O-methylation steps in the ubiquinone biosynthetic pathway. In Salmonella agona (strain SL483), this protein is Ubiquinone biosynthesis O-methyltransferase.